The following is a 222-amino-acid chain: Glutathione-specific gamma-glutamylcyclotransferase 1 (222 aa).

The tract at residues 1-25 (MKQESAAQSTPPPSLSPAPSAQPSW) is disordered. 35 to 40 (IFGYGS) serves as a coordination point for substrate. Glutamate 115 serves as the catalytic Proton acceptor.

Belongs to the gamma-glutamylcyclotransferase family. ChaC subfamily. In terms of assembly, interacts with NOTCH1 (via extracellular region).

It localises to the cytoplasm. It is found in the cytosol. Its subcellular location is the golgi apparatus. The protein resides in the trans-Golgi network. It carries out the reaction glutathione = L-cysteinylglycine + 5-oxo-L-proline. In terms of biological role, catalyzes the cleavage of glutathione into 5-oxo-L-proline and a Cys-Gly dipeptide. Acts specifically on glutathione, but not on other gamma-glutamyl peptides. Glutathione depletion is an important factor for apoptosis initiation and execution. Acts as a pro-apoptotic component of the unfolded protein response pathway by mediating the pro-apoptotic effects of the ATF4-ATF3-DDIT3/CHOP cascade. Negative regulator of Notch signaling pathway involved in embryonic neurogenesis: acts by inhibiting Notch cleavage by furin, maintaining Notch in an immature inactive form, thereby promoting neurogenesis in embryos. The sequence is that of Glutathione-specific gamma-glutamylcyclotransferase 1 from Rattus norvegicus (Rat).